A 249-amino-acid polypeptide reads, in one-letter code: Triosephosphate isomerase (249 aa).

Substrate contacts are provided by Asn-12 and Lys-14. Residue Lys-14 is modified to N6-acetyllysine. Deamidated asparagine is present on Asn-16. Tyr-68 carries the post-translational modification 3'-nitrotyrosine. The residue at position 72 (Asn-72) is a Deamidated asparagine. Ser-80 is subject to Phosphoserine. His-96 acts as the Electrophile in catalysis. Position 106 is a phosphoserine (Ser-106). Residue Lys-142 forms a Glycyl lysine isopeptide (Lys-Gly) (interchain with G-Cter in SUMO1) linkage. An N6-succinyllysine modification is found at Lys-149. An N6-acetyllysine; alternate modification is found at Lys-156. Position 156 is an N6-succinyllysine; alternate (Lys-156). Ser-159 bears the Phosphoserine mark. The active-site Proton acceptor is the Glu-166. A Phosphothreonine modification is found at Thr-173. Lys-194 is subject to N6-acetyllysine; alternate. Lys-194 carries the post-translational modification N6-succinyllysine; alternate. Lys-194 bears the N6-methyllysine; alternate mark. Ser-198 bears the Phosphoserine mark. Tyr-209 carries the 3'-nitrotyrosine modification. The residue at position 212 (Ser-212) is a Phosphoserine. Thr-214 carries the phosphothreonine modification. Phosphoserine is present on Ser-223. Lys-238 bears the N6-acetyllysine mark.

It belongs to the triosephosphate isomerase family. Homodimer. Post-translationally, asn-16 and Asn-72 undergo deamidation which gives rise to four extra negative charges. These are expected to decrease subunit-subunit interactions and so expose the hydrophobic interface to the aqueous environment.

It is found in the cytoplasm. It carries out the reaction D-glyceraldehyde 3-phosphate = dihydroxyacetone phosphate. The enzyme catalyses dihydroxyacetone phosphate = methylglyoxal + phosphate. It functions in the pathway carbohydrate degradation; glycolysis; D-glyceraldehyde 3-phosphate from glycerone phosphate: step 1/1. Its pathway is carbohydrate biosynthesis; gluconeogenesis. Its function is as follows. Triosephosphate isomerase is an extremely efficient metabolic enzyme that catalyzes the interconversion between dihydroxyacetone phosphate (DHAP) and D-glyceraldehyde-3-phosphate (G3P) in glycolysis and gluconeogenesis. Functionally, it is also responsible for the non-negligible production of methylglyoxal a reactive cytotoxic side-product that modifies and can alter proteins, DNA and lipids. The protein is Triosephosphate isomerase (TPI1) of Oryctolagus cuniculus (Rabbit).